The primary structure comprises 325 residues: TNFAIP3-interacting protein 3 (325 aa).

Disordered regions lie at residues 1 to 30 (MAHF…STRK) and 84 to 129 (RFLS…RLNE). The span at 17–28 (STEHKECAEPST) shows a compositional bias: basic and acidic residues. Residues 27 to 265 (STRKNLMNSL…LEKQLKQMYC (239 aa)) adopt a coiled-coil conformation. The ubiquitin-binding domain (UBD) stretch occupies residues 190–248 (HEEMRTEMEVLKQQVQIYEEDFKKERSDRERLNQEKEELQQINETSQSQLNRLNSQIKA).

In terms of assembly, interacts with TNFAIP3. Interacts with polyubiquitin. In terms of tissue distribution, highly expressed in lung, lymph node, thymus and fetal liver. Expressed at lower levels in bone marrow, brain, kidney, spleen, leukocytes and tonsils. Could be detected in heart, salivary gland, adrenal gland, pancreas, ovary and fetal brain. High levels detected in liver, colon, small intestine, muscle, stomach, testis, placenta, thyroid, uterus, prostate, skin and PBL.

In terms of biological role, binds to zinc finger protein TNFAIP3 and inhibits NF-kappa-B activation induced by tumor necrosis factor, Toll-like receptor 4 (TLR4), interleukin-1 and 12-O-tetradecanoylphorbol-13-acetate. Overexpression inhibits NF-kappa-B-dependent gene expression in response to lipopolysaccharide at a level downstream of TRAF6 and upstream of IKBKB. NF-kappa-B inhibition is independent of TNFAIP3 binding. The sequence is that of TNFAIP3-interacting protein 3 from Homo sapiens (Human).